The primary structure comprises 183 residues: Nucleoside triphosphate pyrophosphatase (183 aa).

Residue aspartate 71 is the Proton acceptor of the active site.

This sequence belongs to the Maf family. A divalent metal cation is required as a cofactor.

It localises to the cytoplasm. The catalysed reaction is a ribonucleoside 5'-triphosphate + H2O = a ribonucleoside 5'-phosphate + diphosphate + H(+). It carries out the reaction a 2'-deoxyribonucleoside 5'-triphosphate + H2O = a 2'-deoxyribonucleoside 5'-phosphate + diphosphate + H(+). In terms of biological role, nucleoside triphosphate pyrophosphatase. May have a dual role in cell division arrest and in preventing the incorporation of modified nucleotides into cellular nucleic acids. The chain is Nucleoside triphosphate pyrophosphatase from Campylobacter jejuni subsp. jejuni serotype O:2 (strain ATCC 700819 / NCTC 11168).